The chain runs to 412 residues: Multifunctional CCA protein (412 aa).

Residues glycine 8 and arginine 11 each coordinate ATP. Glycine 8 and arginine 11 together coordinate CTP. Mg(2+)-binding residues include aspartate 21 and aspartate 23. The ATP site is built by arginine 91, arginine 137, and arginine 140. CTP-binding residues include arginine 91, arginine 137, and arginine 140. Positions 226–327 constitute an HD domain; the sequence is TGEHVLMVVE…VKVLERCDAL (102 aa).

The protein belongs to the tRNA nucleotidyltransferase/poly(A) polymerase family. Bacterial CCA-adding enzyme type 1 subfamily. As to quaternary structure, monomer. Can also form homodimers and oligomers. The cofactor is Mg(2+). It depends on Ni(2+) as a cofactor.

It carries out the reaction a tRNA precursor + 2 CTP + ATP = a tRNA with a 3' CCA end + 3 diphosphate. The enzyme catalyses a tRNA with a 3' CCA end + 2 CTP + ATP = a tRNA with a 3' CCACCA end + 3 diphosphate. Functionally, catalyzes the addition and repair of the essential 3'-terminal CCA sequence in tRNAs without using a nucleic acid template. Adds these three nucleotides in the order of C, C, and A to the tRNA nucleotide-73, using CTP and ATP as substrates and producing inorganic pyrophosphate. tRNA 3'-terminal CCA addition is required both for tRNA processing and repair. Also involved in tRNA surveillance by mediating tandem CCA addition to generate a CCACCA at the 3' terminus of unstable tRNAs. While stable tRNAs receive only 3'-terminal CCA, unstable tRNAs are marked with CCACCA and rapidly degraded. This chain is Multifunctional CCA protein, found in Azoarcus sp. (strain BH72).